The following is a 435-amino-acid chain: BAHD acyltransferase BIA1 (435 aa).

Active-site proton acceptor residues include H151 and D369.

It belongs to the plant acyltransferase family. Mostly expressed in roots (particularly in the root elongation zone), and, to a lower extent, in seedling, leaves (especially in hydathodes), siliques (e.g. in developing seeds) and flowers.

Its subcellular location is the cytoplasm. Monitors brassinosteroids (BR) responses and homeostasis, particularly in the root and hypocotyl in darkness. Promotes flavonoid biosynthesis. The protein is BAHD acyltransferase BIA1 of Arabidopsis thaliana (Mouse-ear cress).